The sequence spans 92 residues: Phenol 2-monooxygenase, auxiliary component DmpK (92 aa).

In terms of assembly, homotrimer or homotetramer. Interacts with the phenol hydroxylase components DmpL (P1 component) and DmpN (P3 component).

It functions in the pathway aromatic compound metabolism; phenol degradation. Functionally, dmpK is an auxiliary protein associated with the multicomponent phenol hydroxylase DmpLMNOP and it may be involved in the post-translational incorporation of iron into the oxygenase component of the phenol hydroxylase. Required for growth on phenol but not for in vitro phenol hydroxylase activity. The polypeptide is Phenol 2-monooxygenase, auxiliary component DmpK (Pseudomonas sp. (strain CF600)).